Here is a 92-residue protein sequence, read N- to C-terminus: UPF0250 protein XF_1271 (92 aa).

Belongs to the UPF0250 family.

The sequence is that of UPF0250 protein XF_1271 from Xylella fastidiosa (strain 9a5c).